Reading from the N-terminus, the 420-residue chain is Acetylornithine aminotransferase (420 aa).

Residues 118–119 (GA) and Phe151 contribute to the pyridoxal 5'-phosphate site. Arg154 lines the N(2)-acetyl-L-ornithine pocket. Residue 242-245 (DEVQ) participates in pyridoxal 5'-phosphate binding. At Lys271 the chain carries N6-(pyridoxal phosphate)lysine. Ser298 lines the N(2)-acetyl-L-ornithine pocket. Pyridoxal 5'-phosphate is bound at residue Thr299.

Belongs to the class-III pyridoxal-phosphate-dependent aminotransferase family. ArgD subfamily. In terms of assembly, homodimer. Pyridoxal 5'-phosphate serves as cofactor.

The protein localises to the cytoplasm. It catalyses the reaction N(2)-acetyl-L-ornithine + 2-oxoglutarate = N-acetyl-L-glutamate 5-semialdehyde + L-glutamate. It participates in amino-acid biosynthesis; L-arginine biosynthesis; N(2)-acetyl-L-ornithine from L-glutamate: step 4/4. This Parasynechococcus marenigrum (strain WH8102) protein is Acetylornithine aminotransferase.